A 405-amino-acid chain; its full sequence is Tyrosine--tRNA ligase (405 aa).

The 'HIGH' region motif lies at Pro-48–His-57. Positions Lys-232 to Ser-236 match the 'KMSKS' region motif. Lys-235 contributes to the ATP binding site. The region spanning Ile-343–Phe-404 is the S4 RNA-binding domain.

It belongs to the class-I aminoacyl-tRNA synthetase family. TyrS type 2 subfamily. In terms of assembly, homodimer.

It localises to the cytoplasm. The enzyme catalyses tRNA(Tyr) + L-tyrosine + ATP = L-tyrosyl-tRNA(Tyr) + AMP + diphosphate + H(+). Catalyzes the attachment of tyrosine to tRNA(Tyr) in a two-step reaction: tyrosine is first activated by ATP to form Tyr-AMP and then transferred to the acceptor end of tRNA(Tyr). The polypeptide is Tyrosine--tRNA ligase (Desulfotalea psychrophila (strain LSv54 / DSM 12343)).